We begin with the raw amino-acid sequence, 417 residues long: Serpin A3-7 (417 aa).

The first 25 residues, 1-25 (MRTERTSFLLALGLLVSGFCSRVHC), serve as a signal peptide directing secretion. Asparagine 103, asparagine 183, asparagine 221, and asparagine 267 each carry an N-linked (GlcNAc...) asparagine glycan.

Belongs to the serpin family. As to quaternary structure, homodimer.

Its subcellular location is the cytoplasmic vesicle. It is found in the secretory vesicle. The protein resides in the chromaffin granule. It localises to the secreted. In terms of biological role, serine protease inhibitor. The protein is Serpin A3-7 of Bos taurus (Bovine).